A 442-amino-acid chain; its full sequence is MHYCVLRTFLLLHLVPVALSLSTCSTLDMDQFMRKRIEAIRGQILSKLKLTSPPEDYPEPDEVPPEVISIYNSTRDLLQEKASRRAAACERERSDEEYYAKEVYKIDMPSHFPSETVCPVVTTSSGSVGSFCSIQSQVLCGYLDAIPPTFYRPYFRIVRFDVSTMEKNASNLVKAEFRVFRLQNPKARVAEQRIELYQILKSKDLTSPTQRYIDSKVVKTRAEGEWLSFDVTDAVHEWLHHKDRNLGFKISLHCPCCTFIPSNNYIIPNKSQELEARFAGIDGTSTYASGDQKTIKSTRKKSSGKTPHLLLMLLPSYRLESQQSSRRRKRALDAAYCFRNVQDNCCLRPLYIDFKRDLGWKWIHEPKGYNANFCAGACPYLWSSDTQHTKVLSLYNTINPEASASPCCVSQDLEPLTILYYIGNTPKIEQLSNMIVKSCKCS.

An N-terminal signal peptide occupies residues 1-20; the sequence is MHYCVLRTFLLLHLVPVALS. N-linked (GlcNAc...) asparagine glycosylation is found at Asn-72, Asn-168, and Asn-269. 4 disulfides stabilise this stretch: Cys-337–Cys-346, Cys-345–Cys-408, Cys-374–Cys-439, and Cys-378–Cys-441.

This sequence belongs to the TGF-beta family. In terms of assembly, interacts with the serine proteases, HTRA1 and HTRA3. Interacts with ASPN. Interacts with MFAP5. As to quaternary structure, interacts with Transforming growth factor beta-2 (TGF-beta-2) chain; interaction is non-covalent and maintains (TGF-beta-2) in a latent state. Interacts with LRRC32/GARP; leading to regulate activation of TGF-beta-2. Interacts with NREP; the interaction results in a decrease in TGFB2 autoinduction. Transforming growth factor beta-2: Homodimer; disulfide-linked. Transforming growth factor beta-2: Interacts with TGF-beta receptors (TGFBR1 and TGFBR2), leading to signal transduction. The precursor proprotein is cleaved in the Golgi apparatus to form Transforming growth factor beta-2 (TGF-beta-2) and Latency-associated peptide (LAP) chains, which remain non-covalently linked, rendering TGF-beta-2 inactive. As to expression, expressed in cardiomyocytes. In terms of tissue distribution, expressed in the aorta, primary bronchus, uterus, heart, skeletal muscle, sciatic nerve and spinal cord but not in the intestine.

It is found in the secreted. The protein resides in the extracellular space. The protein localises to the extracellular matrix. Precursor of the Latency-associated peptide (LAP) and Transforming growth factor beta-2 (TGF-beta-2) chains, which constitute the regulatory and active subunit of TGF-beta-2, respectively. In terms of biological role, required to maintain the Transforming growth factor beta-2 (TGF-beta-2) chain in a latent state during storage in extracellular matrix. Associates non-covalently with TGF-beta-2 and regulates its activation via interaction with 'milieu molecules', such as LTBP1 and LRRC32/GARP, that control activation of TGF-beta-2. Its function is as follows. Multifunctional protein that regulates various processes such as angiogenesis and heart development. Activation into mature form follows different steps: following cleavage of the proprotein in the Golgi apparatus, Latency-associated peptide (LAP) and Transforming growth factor beta-2 (TGF-beta-2) chains remain non-covalently linked rendering TGF-beta-2 inactive during storage in extracellular matrix. At the same time, LAP chain interacts with 'milieu molecules', such as LTBP1 and LRRC32/GARP, that control activation of TGF-beta-2 and maintain it in a latent state during storage in extracellular milieus. Once activated following release of LAP, TGF-beta-2 acts by binding to TGF-beta receptors (TGFBR1 and TGFBR2), which transduce signal. This chain is Transforming growth factor beta-2 proprotein (Tgfb2), found in Rattus norvegicus (Rat).